Here is a 168-residue protein sequence, read N- to C-terminus: Sperm acrosome-associated protein 9 (168 aa).

In terms of assembly, microtubule inner protein component of sperm flagellar doublet microtubules. Interacts with CABP1 and CALR. Interacts with INCA1. Interacts with microtubules. In terms of tissue distribution, testis-specific. Expressed in round spermatids.

The protein localises to the cytoplasm. The protein resides in the cytoplasmic vesicle. It is found in the secretory vesicle. It localises to the acrosome. Its subcellular location is the cytoskeleton. The protein localises to the cilium basal body. The protein resides in the flagellum axoneme. It is found in the cilium axoneme. It localises to the nucleus. Its function is as follows. Microtubule inner protein (MIP) part of the dynein-decorated doublet microtubules (DMTs) of multiciliated respiratory cells and the distal singlet microtubules of monoflagellated spermatozoa. Forms an extensive interaction network cross-linking the lumen of axonemal doublet microtubules. This Rattus norvegicus (Rat) protein is Sperm acrosome-associated protein 9 (Spaca9).